The primary structure comprises 441 residues: MFAPPAARAMKVLDRSFFKKTIPTSAARIFNAKDISRCRKELTASRDTLPNNRVDPIRPDVDSERAQKGGKCLVLRPEVVHNDRTTWSPKLRDLEQDGTLGVIPFQLDLDYDFFTYSEITSAIIPPPETKQDDEIPQGFALAGHVAHLNLRERYWPYKYLIADVLADKNPMVKTVINKLDNVGTENAFRTFQYEVLHGPDDMNVELREQGCTFKFDFAKARQYATIMAGVGPFAIPAGKKKCFVWANDLNPESYKSLEDNIRINKVGDFVTPRNTDGADFIRQSAIDLLKSERSIPIYPKVKFSRSAPPTQKPVPDRTLVQPRTFQHYVMNLPASAITFLPSFIGLYSNIPGLSIGEAKKLFAPHTQQKLPMIHVHCFSTKSDDNVAETKEICAEISRQLQCEMTPETPDVNIHDVRDVAPKKRMFCASFRLPEEVAFREI.

A mitochondrion-targeting transit peptide spans 1–9 (MFAPPAARA). S-adenosyl-L-methionine contacts are provided by residues R221, 248 to 249 (DL), 276 to 277 (DG), and N331.

Belongs to the class I-like SAM-binding methyltransferase superfamily. TRM5/TYW2 family. As to quaternary structure, monomer.

The protein resides in the mitochondrion matrix. The protein localises to the nucleus. Its subcellular location is the cytoplasm. The enzyme catalyses guanosine(37) in tRNA + S-adenosyl-L-methionine = N(1)-methylguanosine(37) in tRNA + S-adenosyl-L-homocysteine + H(+). Its function is as follows. Specifically methylates the N1 position of guanosine-37 in various cytoplasmic and mitochondrial tRNAs. Methylation is not dependent on the nature of the nucleoside 5' of the target nucleoside. This is the first step in the biosynthesis of wybutosine (yW), a modified base adjacent to the anticodon of tRNAs and required for accurate decoding. This is tRNA (guanine(37)-N(1))-methyltransferase from Phaeosphaeria nodorum (strain SN15 / ATCC MYA-4574 / FGSC 10173) (Glume blotch fungus).